The primary structure comprises 449 residues: MANVVENLGKLERRVTISLPKDVVQKEIDARIQKLAKNVRMPGFRPGKVPLKMVAQQYAGQVEAEVLSDKIGQEFFTISRAENLRVAGQPSFAPKEDTQQESAYAFDATFEVYPEVKIGDLATAEVERSTTTIGDAEIDRTLDILRKQRVHFHARGEGGEHGDGGADTAAQNGDRVTVDFVGKIDGVAFQGGTAEDFVFVLGEGRMLPEFETAALGLKAGESREFDLKFPDDYHGKDVAGKTAQFTVTLKKVEWPHLPEIDADFAKSLGVEDGDLTKMRAEIKENLEREAKRRTQSIVKNQVMDALLKISELDVPKALIEQDQQRLVEMARQDLAQRGVPNAKDAPIPAEMFADQAERRVKLGLVLAELVKANGLEAKPEQIRAEVDEFAKSYEDPKEVVRWYYSNQQRLAEMEAFVVESNVVDFVLGKAKVTDKEVSFEALASATAQA.

The region spanning 173–258 (GDRVTVDFVG…LKKVEWPHLP (86 aa)) is the PPIase FKBP-type domain.

It belongs to the FKBP-type PPIase family. Tig subfamily.

It is found in the cytoplasm. The enzyme catalyses [protein]-peptidylproline (omega=180) = [protein]-peptidylproline (omega=0). Its function is as follows. Involved in protein export. Acts as a chaperone by maintaining the newly synthesized protein in an open conformation. Functions as a peptidyl-prolyl cis-trans isomerase. The polypeptide is Trigger factor (Burkholderia mallei (strain NCTC 10229)).